A 265-amino-acid chain; its full sequence is MKLLISNDDGISALGIRTLANALAEAGHDVTVVCPDRERSATGHGLTLHQPIRAEIVESIFHPAIKAWACDGTPSDCVKLALWALLESPPDLVLSGINQGANLGTEILYSGTVSAAMEGMIEGIPSIAFSLTSHISRNFQPAAKFATILVEQLAAKPIPDLMLLNVNIPPVEWEEIAGVKLTRQGVRRYVDVFDKRTDPRGKTYYWLTGEVLEEVEPPEGLNLPQNVPIDVHVVRNNYISITPLQYNLTYATGIDKLSDWDFPLS.

Positions 8, 9, 40, and 98 each coordinate a divalent metal cation.

Belongs to the SurE nucleotidase family. A divalent metal cation is required as a cofactor.

It localises to the cytoplasm. It catalyses the reaction a ribonucleoside 5'-phosphate + H2O = a ribonucleoside + phosphate. Its function is as follows. Nucleotidase that shows phosphatase activity on nucleoside 5'-monophosphates. The sequence is that of 5'-nucleotidase SurE from Nostoc sp. (strain PCC 7120 / SAG 25.82 / UTEX 2576).